The sequence spans 312 residues: Ribonuclease Z (312 aa).

Zn(2+) contacts are provided by H62, H64, D66, H67, H144, D215, and H273. D66 (proton acceptor) is an active-site residue.

This sequence belongs to the RNase Z family. In terms of assembly, homodimer. Zn(2+) is required as a cofactor.

The enzyme catalyses Endonucleolytic cleavage of RNA, removing extra 3' nucleotides from tRNA precursor, generating 3' termini of tRNAs. A 3'-hydroxy group is left at the tRNA terminus and a 5'-phosphoryl group is left at the trailer molecule.. Functionally, zinc phosphodiesterase, which displays some tRNA 3'-processing endonuclease activity. Probably involved in tRNA maturation, by removing a 3'-trailer from precursor tRNA. This Prochlorococcus marinus (strain MIT 9301) protein is Ribonuclease Z.